The chain runs to 160 residues: 2-C-methyl-D-erythritol 2,4-cyclodiphosphate synthase (160 aa).

Asp-11 and His-13 together coordinate a divalent metal cation. 4-CDP-2-C-methyl-D-erythritol 2-phosphate contacts are provided by residues 11–13 and 37–38; these read DVH and HS. His-45 is a binding site for a divalent metal cation. 4-CDP-2-C-methyl-D-erythritol 2-phosphate is bound by residues 59–61, 64–68, 103–109, 135–138, Phe-142, and Arg-145; these read DIG, FPDTD, AQAPKMA, and TTTE.

The protein belongs to the IspF family. As to quaternary structure, homotrimer. It depends on a divalent metal cation as a cofactor.

The catalysed reaction is 4-CDP-2-C-methyl-D-erythritol 2-phosphate = 2-C-methyl-D-erythritol 2,4-cyclic diphosphate + CMP. Its pathway is isoprenoid biosynthesis; isopentenyl diphosphate biosynthesis via DXP pathway; isopentenyl diphosphate from 1-deoxy-D-xylulose 5-phosphate: step 4/6. Its function is as follows. Involved in the biosynthesis of isopentenyl diphosphate (IPP) and dimethylallyl diphosphate (DMAPP), two major building blocks of isoprenoid compounds. Catalyzes the conversion of 4-diphosphocytidyl-2-C-methyl-D-erythritol 2-phosphate (CDP-ME2P) to 2-C-methyl-D-erythritol 2,4-cyclodiphosphate (ME-CPP) with a corresponding release of cytidine 5-monophosphate (CMP). In Thioalkalivibrio sulfidiphilus (strain HL-EbGR7), this protein is 2-C-methyl-D-erythritol 2,4-cyclodiphosphate synthase.